A 525-amino-acid chain; its full sequence is MMRWFLLIGLASAAATDSSASFESRCQHFHKEIHLQNVHVHSTTYVPIGSNISMAYNPPICGGTSSSSISTIEFCQVALNVTTSDKSQFFMEAWLPSNYTGRFLSTGNGGLNGCVGYGDMIYASQYGFATIGTNNGHFGDTGQYFLNNPEVIEDFAYRALHTGTVVGKALTKLFYPQGYKNSYYLGCSTGGRQGWKSIQRFPDDFDGVVAGAPAFNFVNLCNWGSRFLKITGPPDSDTFVTSAQWSIIHNEIIRQCDALDGAVDGTIEDTDLCQPIFETLICNSTAVNKTSCLTGVQANTVNEVFSAMYGLDGKWLYPRMQPGSELAASFIYYSGNGFKYSDDWFKYVVYNDSNWDHSTWTLADAAAADAQDPFQISTFDGDISGFQKAGGKVLHYHGLEDAIITSDSSKAYYKHVADTMGLSPSDLDQFYRFFPISGMGHCSPGTGAASIGQGSSTYAGDDPQDNVLMAMVQWVEKGIAPEYVRGSKKSIDGQTEYRRKHCKYPKRNRYVGPGKYTDENAWKCV.

A signal peptide spans 1 to 20 (MMRWFLLIGLASAAATDSSA). Disulfide bonds link C26–C75, C61–C114, C187–C442, C256–C273, C282–C292, and C502–C524. Residues N51, N80, and N98 are each glycosylated (N-linked (GlcNAc...) asparagine). S188 (acyl-ester intermediate) is an active-site residue. Residues D257, D260, A262, and D264 each contribute to the Ca(2+) site. Residues N283, N288, and N351 are each glycosylated (N-linked (GlcNAc...) asparagine). Residues D401 and H441 each act as charge relay system in the active site.

Belongs to the tannase family.

The protein localises to the secreted. The enzyme catalyses feruloyl-polysaccharide + H2O = ferulate + polysaccharide.. Its function is as follows. Involved in degradation of plant cell walls. Hydrolyzes the feruloyl-arabinose ester bond in arabinoxylans as well as the feruloyl-galactose and feruloyl-arabinose ester bonds in pectin. This chain is Probable feruloyl esterase B-1 (faeB-1), found in Neosartorya fischeri (strain ATCC 1020 / DSM 3700 / CBS 544.65 / FGSC A1164 / JCM 1740 / NRRL 181 / WB 181) (Aspergillus fischerianus).